We begin with the raw amino-acid sequence, 188 residues long: Tumor necrosis factor alpha-induced protein 8-like protein (188 aa).

It belongs to the TNFAIP8 family.

In Drosophila pseudoobscura pseudoobscura (Fruit fly), this protein is Tumor necrosis factor alpha-induced protein 8-like protein.